Reading from the N-terminus, the 119-residue chain is Large ribosomal subunit protein uL18 (119 aa).

This sequence belongs to the universal ribosomal protein uL18 family. In terms of assembly, part of the 50S ribosomal subunit; part of the 5S rRNA/L5/L18/L25 subcomplex. Contacts the 5S and 23S rRNAs.

This is one of the proteins that bind and probably mediate the attachment of the 5S RNA into the large ribosomal subunit, where it forms part of the central protuberance. The sequence is that of Large ribosomal subunit protein uL18 from Solibacter usitatus (strain Ellin6076).